The sequence spans 296 residues: 3-methyl-2-oxobutanoate hydroxymethyltransferase (296 aa).

The span at 1 to 14 (MTAPTPTPANAATP) shows a compositional bias: low complexity. The disordered stretch occupies residues 1-29 (MTAPTPTPANAATPYGTLPPASPLPQRRP). Mg(2+) is bound by residues D71 and D114. 3-methyl-2-oxobutanoate contacts are provided by residues 71–72 (DS), D114, and K143. E145 contributes to the Mg(2+) binding site. E212 serves as the catalytic Proton acceptor.

The protein belongs to the PanB family. Homodecamer; pentamer of dimers. It depends on Mg(2+) as a cofactor.

It localises to the cytoplasm. It catalyses the reaction 3-methyl-2-oxobutanoate + (6R)-5,10-methylene-5,6,7,8-tetrahydrofolate + H2O = 2-dehydropantoate + (6S)-5,6,7,8-tetrahydrofolate. Its pathway is cofactor biosynthesis; (R)-pantothenate biosynthesis; (R)-pantoate from 3-methyl-2-oxobutanoate: step 1/2. Catalyzes the reversible reaction in which hydroxymethyl group from 5,10-methylenetetrahydrofolate is transferred onto alpha-ketoisovalerate to form ketopantoate. The sequence is that of 3-methyl-2-oxobutanoate hydroxymethyltransferase from Paracidovorax citrulli (strain AAC00-1) (Acidovorax citrulli).